Here is a 181-residue protein sequence, read N- to C-terminus: Large ribosomal subunit protein uL5 (181 aa).

Belongs to the universal ribosomal protein uL5 family. In terms of assembly, part of the 50S ribosomal subunit; part of the 5S rRNA/L5/L18/L25 subcomplex. Contacts the 5S rRNA and the P site tRNA. Forms a bridge to the 30S subunit in the 70S ribosome.

Functionally, this is one of the proteins that bind and probably mediate the attachment of the 5S RNA into the large ribosomal subunit, where it forms part of the central protuberance. In the 70S ribosome it contacts protein S13 of the 30S subunit (bridge B1b), connecting the 2 subunits; this bridge is implicated in subunit movement. Contacts the P site tRNA; the 5S rRNA and some of its associated proteins might help stabilize positioning of ribosome-bound tRNAs. The protein is Large ribosomal subunit protein uL5 of Baumannia cicadellinicola subsp. Homalodisca coagulata.